The chain runs to 199 residues: FMN-dependent NADH:quinone oxidoreductase 2 (199 aa).

Residues Ser-10, 16 to 18 (SVS), and 96 to 99 (MYNF) each bind FMN.

The protein belongs to the azoreductase type 1 family. As to quaternary structure, homodimer. FMN serves as cofactor.

The enzyme catalyses 2 a quinone + NADH + H(+) = 2 a 1,4-benzosemiquinone + NAD(+). The catalysed reaction is N,N-dimethyl-1,4-phenylenediamine + anthranilate + 2 NAD(+) = 2-(4-dimethylaminophenyl)diazenylbenzoate + 2 NADH + 2 H(+). Quinone reductase that provides resistance to thiol-specific stress caused by electrophilic quinones. Functionally, also exhibits azoreductase activity. Catalyzes the reductive cleavage of the azo bond in aromatic azo compounds to the corresponding amines. The sequence is that of FMN-dependent NADH:quinone oxidoreductase 2 from Pseudomonas fluorescens (strain ATCC BAA-477 / NRRL B-23932 / Pf-5).